Reading from the N-terminus, the 164-residue chain is Cytochrome c-type biogenesis protein CcmE (164 aa).

At 1 to 8 the chain is on the cytoplasmic side; it reads MNPRRKQR. Residues 9–29 form a helical; Signal-anchor for type II membrane protein membrane-spanning segment; the sequence is LAVVGIIGFLIVSAVGLMLYA. Over 30 to 164 the chain is Periplasmic; sequence LNDSIDLFYT…YESSNGAGSK (135 aa). Heme contacts are provided by histidine 128 and tyrosine 132. The segment at 142 to 164 is disordered; it reads KGIKHVKPENMPTYESSNGAGSK. The segment covering 154–164 has biased composition (polar residues); sequence TYESSNGAGSK.

The protein belongs to the CcmE/CycJ family.

The protein localises to the cell inner membrane. Its function is as follows. Heme chaperone required for the biogenesis of c-type cytochromes. Transiently binds heme delivered by CcmC and transfers the heme to apo-cytochromes in a process facilitated by CcmF and CcmH. This Alteromonas mediterranea (strain DSM 17117 / CIP 110805 / LMG 28347 / Deep ecotype) protein is Cytochrome c-type biogenesis protein CcmE.